A 101-amino-acid chain; its full sequence is MAKESMKAREAKRTKLVAKYAEKRAALKAIISDVNVSEEERWDAVLKLQQLPRDSSSSRQRNRCRVTGRPHGYLRKFGLSRIKLREAAMRGEVPGLKKASW.

This sequence belongs to the universal ribosomal protein uS14 family. Part of the 30S ribosomal subunit. Contacts proteins S3 and S10.

Binds 16S rRNA, required for the assembly of 30S particles and may also be responsible for determining the conformation of the 16S rRNA at the A site. The chain is Small ribosomal subunit protein uS14 from Alteromonas mediterranea (strain DSM 17117 / CIP 110805 / LMG 28347 / Deep ecotype).